Here is a 155-residue protein sequence, read N- to C-terminus: SsrA-binding protein (155 aa).

It belongs to the SmpB family.

It is found in the cytoplasm. Required for rescue of stalled ribosomes mediated by trans-translation. Binds to transfer-messenger RNA (tmRNA), required for stable association of tmRNA with ribosomes. tmRNA and SmpB together mimic tRNA shape, replacing the anticodon stem-loop with SmpB. tmRNA is encoded by the ssrA gene; the 2 termini fold to resemble tRNA(Ala) and it encodes a 'tag peptide', a short internal open reading frame. During trans-translation Ala-aminoacylated tmRNA acts like a tRNA, entering the A-site of stalled ribosomes, displacing the stalled mRNA. The ribosome then switches to translate the ORF on the tmRNA; the nascent peptide is terminated with the 'tag peptide' encoded by the tmRNA and targeted for degradation. The ribosome is freed to recommence translation, which seems to be the essential function of trans-translation. This Helicobacter hepaticus (strain ATCC 51449 / 3B1) protein is SsrA-binding protein.